The following is a 166-amino-acid chain: Large ribosomal subunit protein uL10 (166 aa).

This sequence belongs to the universal ribosomal protein uL10 family. As to quaternary structure, part of the ribosomal stalk of the 50S ribosomal subunit. The N-terminus interacts with L11 and the large rRNA to form the base of the stalk. The C-terminus forms an elongated spine to which L12 dimers bind in a sequential fashion forming a multimeric L10(L12)X complex.

Functionally, forms part of the ribosomal stalk, playing a central role in the interaction of the ribosome with GTP-bound translation factors. This chain is Large ribosomal subunit protein uL10, found in Ureaplasma urealyticum serovar 10 (strain ATCC 33699 / Western).